Here is a 616-residue protein sequence, read N- to C-terminus: Chaperone protein HscA (616 aa).

It belongs to the heat shock protein 70 family.

In terms of biological role, chaperone involved in the maturation of iron-sulfur cluster-containing proteins. Has a low intrinsic ATPase activity which is markedly stimulated by HscB. Involved in the maturation of IscU. In Escherichia coli O45:K1 (strain S88 / ExPEC), this protein is Chaperone protein HscA.